The following is a 129-amino-acid chain: Lysozyme C (129 aa).

Residues 1–129 form the C-type lysozyme domain; sequence KIYTRCELAA…VSKWIKDCKL (129 aa). Intrachain disulfides connect Cys-6/Cys-127, Cys-30/Cys-115, Cys-64/Cys-80, and Cys-76/Cys-94. Catalysis depends on residues Glu-35 and Asp-52.

The protein belongs to the glycosyl hydrolase 22 family. Monomer.

The protein localises to the secreted. It catalyses the reaction Hydrolysis of (1-&gt;4)-beta-linkages between N-acetylmuramic acid and N-acetyl-D-glucosamine residues in a peptidoglycan and between N-acetyl-D-glucosamine residues in chitodextrins.. Functionally, lysozymes have primarily a bacteriolytic function; those in tissues and body fluids are associated with the monocyte-macrophage system and enhance the activity of immunoagents. The sequence is that of Lysozyme C (LYZ) from Crax fasciolata (Bare-faced curassow).